The primary structure comprises 103 residues: Nucleoid-associated protein Cgl0243/cg0297 (103 aa).

This sequence belongs to the YbaB/EbfC family. In terms of assembly, homodimer.

It is found in the cytoplasm. The protein resides in the nucleoid. Functionally, binds to DNA and alters its conformation. May be involved in regulation of gene expression, nucleoid organization and DNA protection. The protein is Nucleoid-associated protein Cgl0243/cg0297 of Corynebacterium glutamicum (strain ATCC 13032 / DSM 20300 / JCM 1318 / BCRC 11384 / CCUG 27702 / LMG 3730 / NBRC 12168 / NCIMB 10025 / NRRL B-2784 / 534).